The following is a 352-amino-acid chain: Ribosomal RNA large subunit methyltransferase M (352 aa).

S-adenosyl-L-methionine is bound by residues serine 187, 218–221 (APGG), aspartate 237, aspartate 257, and aspartate 273. Lysine 302 acts as the Proton acceptor in catalysis.

It belongs to the class I-like SAM-binding methyltransferase superfamily. RNA methyltransferase RlmE family. RlmM subfamily. In terms of assembly, monomer.

It localises to the cytoplasm. The enzyme catalyses cytidine(2498) in 23S rRNA + S-adenosyl-L-methionine = 2'-O-methylcytidine(2498) in 23S rRNA + S-adenosyl-L-homocysteine + H(+). Functionally, catalyzes the 2'-O-methylation at nucleotide C2498 in 23S rRNA. The protein is Ribosomal RNA large subunit methyltransferase M of Methylococcus capsulatus (strain ATCC 33009 / NCIMB 11132 / Bath).